Consider the following 178-residue polypeptide: RNA pyrophosphohydrolase (178 aa).

A Nudix hydrolase domain is found at 18 to 171 (PYRPCVGLMV…KRKVYEQVVA (154 aa)). A Nudix box motif is present at residues 59–80 (GGIDKGEDPAQAALRELYEETG).

Belongs to the Nudix hydrolase family. RppH subfamily. It depends on a divalent metal cation as a cofactor.

In terms of biological role, accelerates the degradation of transcripts by removing pyrophosphate from the 5'-end of triphosphorylated RNA, leading to a more labile monophosphorylated state that can stimulate subsequent ribonuclease cleavage. The protein is RNA pyrophosphohydrolase of Brucella melitensis biotype 2 (strain ATCC 23457).